The primary structure comprises 246 residues: NH(3)-dependent NAD(+) synthetase (246 aa).

Residue 29–36 coordinates ATP; sequence GLSGGIDS. A Mg(2+)-binding site is contributed by Asp35. Arg110 is a binding site for deamido-NAD(+). An ATP-binding site is contributed by Thr130. Mg(2+) is bound at residue Glu135. ATP is bound by residues Lys159 and Ser181.

It belongs to the NAD synthetase family. Homodimer.

The enzyme catalyses deamido-NAD(+) + NH4(+) + ATP = AMP + diphosphate + NAD(+) + H(+). It participates in cofactor biosynthesis; NAD(+) biosynthesis; NAD(+) from deamido-NAD(+) (ammonia route): step 1/1. Its function is as follows. Catalyzes the ATP-dependent amidation of deamido-NAD to form NAD. Uses ammonia as a nitrogen source. The sequence is that of NH(3)-dependent NAD(+) synthetase from Campylobacter jejuni subsp. doylei (strain ATCC BAA-1458 / RM4099 / 269.97).